The chain runs to 590 residues: Aspartate--tRNA ligase (590 aa).

E174 provides a ligand contact to L-aspartate. An aspartate region spans residues 198–201 (QLMK). L-aspartate is bound at residue R220. Residues 220-222 (RDE) and Q229 contribute to the ATP site. Position 443 (H443) interacts with L-aspartate. Position 484 (E484) interacts with ATP. R491 provides a ligand contact to L-aspartate. ATP is bound at residue 536–539 (GLDR).

The protein belongs to the class-II aminoacyl-tRNA synthetase family. Type 1 subfamily. Homodimer.

It localises to the cytoplasm. It catalyses the reaction tRNA(Asp) + L-aspartate + ATP = L-aspartyl-tRNA(Asp) + AMP + diphosphate. In terms of biological role, catalyzes the attachment of L-aspartate to tRNA(Asp) in a two-step reaction: L-aspartate is first activated by ATP to form Asp-AMP and then transferred to the acceptor end of tRNA(Asp). The protein is Aspartate--tRNA ligase of Lactococcus lactis subsp. lactis (strain IL1403) (Streptococcus lactis).